A 73-amino-acid chain; its full sequence is Conotoxin Asp7/Gla(3)-TxVI (73 aa).

A signal peptide spans 1–19; the sequence is MQKLIILLLVAAVLMSTQA. Positions 20-44 are excised as a propeptide; the sequence is VLQEKRPKEKIKFLSKRKTDAEKQQ. 3 disulfides stabilise this stretch: cysteine 48–cysteine 62, cysteine 55–cysteine 66, and cysteine 61–cysteine 71. 4-hydroxyproline occurs at positions 49 and 54. The residue at position 60 (glutamate 60) is a 4-carboxyglutamate. Position 64 is a 6'-bromotryptophan (tryptophan 64).

Expressed by the venom duct.

The protein resides in the secreted. This is Conotoxin Asp7/Gla(3)-TxVI from Conus textile (Cloth-of-gold cone).